The primary structure comprises 834 residues: Protein argonaute (834 aa).

One can recognise a PAZ domain in the interval 210 to 326 (SLLQILMEYT…LPIEFCFVVK (117 aa)). Residues 500 to 799 (YLFFILDKNS…VSNLARYQDV (300 aa)) form the Piwi domain.

Belongs to the argonaute family. Ago subfamily. As to quaternary structure, ago1, chp1 and tas3 interact to form the core of the RNA-induced transcriptional silencing (RITS) complex. The RITS complex interacts with the RDRC complex via interaction between ago1 and hrr1. Clr4 has a role in mediating this interaction. Component of the argonaute siRNA chaperone (ARC) complex composed of ago1, arb1 and arb2. Interacts with arb1.

The protein resides in the cytoplasm. It is found in the nucleus. It localises to the chromosome. The protein localises to the centromere. Its subcellular location is the telomere. In terms of biological role, required for G1 arrest and mating in response to nitrogen starvation. Ago1 regulation of cytokinesis and cell cycle checkpoints occurs downstream of dcr1. Required, indirectly, for regulated hyperphosphorylation of cdc2. Has a role in the RNA interference (RNAi) pathway which is important for heterochromatin formation, accurate chromosome segregation, centromere cohesion and telomere function during mitosis and meiosis. Required for silencing at the centromeres and for initiation of transcriptionally silent heterochromatin at the mating type locus. Promotes histone H3K9 methylation necessary for centromere function. Required for recruitment of swi6 and cohesin to an ectopic dg repeat. A member of the RNA-induced transcriptional silencing (RITS) complex which is involved in the biosynthesis of dsRNA from primer siRNAs provided by the RNA-directed RNA polymerase (RDRC) complex. Has ribonuclease H-like cleavage (slicing) activity towards target messages complementary to siRNA and can direct site-specific cleavage of RNA substrates via siRNA. Slicing activity is required for both post-transcriptional and transcriptional gene silencing as well as for histone H3 'Lys-10' methylation spreading, conversion of double-stranded siRNA to single-stranded siRNA and siRNA-dependent association of ago1 with chromatin. A member of the argonaute siRNA chaperone (ARC) complex which is required for histone H3K9 methylation, heterochromatin assembly and siRNA generation. The ARC complex contains mostly double-stranded siRNA. In Schizosaccharomyces pombe (strain 972 / ATCC 24843) (Fission yeast), this protein is Protein argonaute (ago1).